The primary structure comprises 320 residues: Undecaprenyl-diphosphatase (320 aa).

The next 8 membrane-spanning stretches (helical) occupy residues 9 to 29 (FVLI…LEVF), 82 to 102 (GVAF…WYFW), 130 to 150 (LGIV…KTFI), 161 to 181 (LGAI…GEKL), 191 to 211 (LTMQ…IPGV), 236 to 256 (FLLG…DLLA), 265 to 285 (LPLI…IAGL), and 296 to 316 (VFIW…SAGI).

This sequence belongs to the UppP family.

The protein resides in the cell inner membrane. It catalyses the reaction di-trans,octa-cis-undecaprenyl diphosphate + H2O = di-trans,octa-cis-undecaprenyl phosphate + phosphate + H(+). Catalyzes the dephosphorylation of undecaprenyl diphosphate (UPP). Confers resistance to bacitracin. The chain is Undecaprenyl-diphosphatase from Nostoc sp. (strain PCC 7120 / SAG 25.82 / UTEX 2576).